The chain runs to 318 residues: Serpentine receptor class delta-25 (318 aa).

Helical transmembrane passes span 5-25, 38-58, 88-108, 126-146, 176-196, 226-246, and 258-278; these read LLHS…MYLA, VVIT…FFVM, HMFM…SYLF, IAFY…SIYI, ITLL…YTFI, TFKL…VAMF, and IVSV…IIFV.

It belongs to the nematode receptor-like protein srd family.

It is found in the membrane. The protein is Serpentine receptor class delta-25 (srd-25) of Caenorhabditis elegans.